The sequence spans 345 residues: IGF-like family receptor 1 (345 aa).

An N-terminal signal peptide occupies residues 1 to 20 (MGPSWLLWTVAVAVLLLTRA). Residues 21 to 163 (ASMEASSFCG…SSRPGFVSAS (143 aa)) are Extracellular-facing. N-linked (GlcNAc...) asparagine glycosylation occurs at Asn87. Residues 106–149 (VESPGRTHKQCRKKPVPPKDVCPLKPEDAGASSSPGRWSLGQTT) form a disordered region. Residues 111-121 (RTHKQCRKKPV) show a composition bias toward basic residues. The segment covering 136–149 (ASSSPGRWSLGQTT) has biased composition (polar residues). Residues 164–184 (VLPLAVLPLLLVLLLILAVVL) form a helical membrane-spanning segment. The Cytoplasmic portion of the chain corresponds to 185 to 345 (LSLFKRKVRS…DALQVLSKLG (161 aa)).

As to expression, ubiquitously expressed with higher expression in lymph node. Highly expressed in T-cells and monocytes.

The protein localises to the cell membrane. Probable cell membrane receptor for the IGF-like family protein IGFL. This chain is IGF-like family receptor 1 (Igflr1), found in Mus musculus (Mouse).